The sequence spans 510 residues: Protein phosphatase 1H (510 aa).

The 431-residue stretch at 73 to 503 (STGYAEVINA…DDISVYVIPL (431 aa)) folds into the PPM-type phosphatase domain. Disordered stretches follow at residues 105 to 128 (VQST…EGLQ) and 188 to 225 (LGEE…PTRF).

This sequence belongs to the PP2C family.

It localises to the nucleus. The protein localises to the cytoplasm. It carries out the reaction O-phospho-L-seryl-[protein] + H2O = L-seryl-[protein] + phosphate. The catalysed reaction is O-phospho-L-threonyl-[protein] + H2O = L-threonyl-[protein] + phosphate. This Xenopus tropicalis (Western clawed frog) protein is Protein phosphatase 1H (ppm1h).